A 91-amino-acid chain; its full sequence is Small ribosomal subunit protein uS15 (91 aa).

It belongs to the universal ribosomal protein uS15 family. As to quaternary structure, part of the 30S ribosomal subunit. Forms a bridge to the 50S subunit in the 70S ribosome, contacting the 23S rRNA.

In terms of biological role, one of the primary rRNA binding proteins, it binds directly to 16S rRNA where it helps nucleate assembly of the platform of the 30S subunit by binding and bridging several RNA helices of the 16S rRNA. Forms an intersubunit bridge (bridge B4) with the 23S rRNA of the 50S subunit in the ribosome. The sequence is that of Small ribosomal subunit protein uS15 from Legionella pneumophila (strain Corby).